Here is an 817-residue protein sequence, read N- to C-terminus: Collagen-like protein 4 (817 aa).

Collagen-like domains follow at residues 83-142 (GDTG…KGQD), 145-264 (GSKG…KGDD), and 268-327 (GIQG…KGLK). Disordered stretches follow at residues 87 to 107 (NKGE…GDNG), 120 to 458 (FNGS…DKGD), and 479 to 543 (IIGD…KGDI). 2 N-linked (GlcNAc...) asparagine; by host glycosylation sites follow: asparagine 106 and asparagine 121. 2 stretches are compositionally biased toward basic and acidic residues: residues 126 to 141 (IKGD…DKGQ) and 149 to 161 (QKGE…DDGI). Asparagine 183 carries an N-linked (GlcNAc...) asparagine; by host glycan. Basic and acidic residues-rich tracts occupy residues 212–224 (IKGD…EDGI) and 233–245 (SKGE…DDGT). Residues 246–260 (KGITGLKGTKGNSGS) show a composition bias toward low complexity. The span at 294 to 341 (KGSDGDKGNKGLDGIKGDLGDDGIKGDKGIKGLKGDTGNSDKGDKGSK) shows a compositional bias: basic and acidic residues. 2 N-linked (GlcNAc...) asparagine; by host glycosylation sites follow: asparagine 345 and asparagine 360. Collagen-like domains are found at residues 352–411 (GDKG…KGLV) and 430–489 (GDKG…KGIK). Basic and acidic residues-rich tracts occupy residues 354 to 368 (KGSK…ESGD), 377 to 390 (SKGD…KGDL), and 428 to 458 (SKGD…DKGD). Residues 480-494 (IGDNGSKGIKGSSNN) are compositionally biased toward low complexity. N-linked (GlcNAc...) asparagine; by host glycosylation is present at asparagine 483. Basic and acidic residues-rich tracts occupy residues 495-504 (KGDKGDKGNT), 515-525 (IKGDKGIKGSK), and 533-543 (EKGEKGTKGDI). One can recognise a Collagen-like 6 domain in the interval 512–570 (TKGIKGDKGIKGSKGDLGSVGEKGEKGTKGDIGTKGETGLKGIIGDKGELGSKGIKGLS). Asparagine 709, asparagine 712, and asparagine 715 each carry an N-linked (GlcNAc...) asparagine; by host glycan. Positions 757–771 (GGGGASAFGNGGRGG) are enriched in gly residues. The segment at 757–804 (GGGGASAFGNGGRGGNTTQAATKGEYGSGGGGGSEFSPSGSTNGGDGG) is disordered. A glycan (N-linked (GlcNAc...) asparagine; by host) is linked at asparagine 772.

Post-translationally, may be hydroxylated on lysine by the viral-encoded procollagen-lysine,2-oxoglutarate 5-dioxygenase.

The protein resides in the virion. May participate in the formation of a layer of cross-linked glycosylated fibrils at the viral surface thus giving it a hairy-like appearance. This chain is Collagen-like protein 4, found in Acanthamoeba polyphaga (Amoeba).